An 83-amino-acid polypeptide reads, in one-letter code: Alpha-elapitoxin-Ppr1 (83 aa).

Positions 1–21 (MKTLLLTLVVVTIVCLDLGYT) are cleaved as a signal peptide. Cystine bridges form between Cys24/Cys45, Cys38/Cys62, Cys64/Cys75, and Cys76/Cys81.

This sequence belongs to the three-finger toxin family. Short-chain subfamily. Type I alpha-neurotoxin sub-subfamily. In terms of tissue distribution, expressed by the venom gland.

Its subcellular location is the secreted. In terms of biological role, bird-specific neurotoxin (tested on chicken) that acts as a pseudo-irreversible antagonist at the nicotinic acetylcholine receptor (nAChR) of the skeletal neuromuscular junction. Has no significant effect on the electrically-induced twitches of the rat isolated phrenic nerve-diaphragm preparation. This is Alpha-elapitoxin-Ppr1 from Pseudechis porphyriacus (Red-bellied black snake).